The sequence spans 83 residues: Cytochrome b559 subunit alpha (83 aa).

The helical transmembrane segment at 21–35 (VIHSITIPSLFIAGW) threads the bilayer. His-23 is a binding site for heme.

Belongs to the PsbE/PsbF family. Heterodimer of an alpha subunit and a beta subunit. PSII is composed of 1 copy each of membrane proteins PsbA, PsbB, PsbC, PsbD, PsbE, PsbF, PsbH, PsbI, PsbJ, PsbK, PsbL, PsbM, PsbT, PsbX, PsbY, PsbZ, Psb30/Ycf12, at least 3 peripheral proteins of the oxygen-evolving complex and a large number of cofactors. It forms dimeric complexes. The cofactor is heme b.

The protein localises to the plastid. Its subcellular location is the chloroplast thylakoid membrane. Functionally, this b-type cytochrome is tightly associated with the reaction center of photosystem II (PSII). PSII is a light-driven water:plastoquinone oxidoreductase that uses light energy to abstract electrons from H(2)O, generating O(2) and a proton gradient subsequently used for ATP formation. It consists of a core antenna complex that captures photons, and an electron transfer chain that converts photonic excitation into a charge separation. This is Cytochrome b559 subunit alpha from Anthoceros angustus (Hornwort).